Reading from the N-terminus, the 99-residue chain is Small ribosomal subunit protein bS20 (99 aa).

This sequence belongs to the bacterial ribosomal protein bS20 family.

Functionally, binds directly to 16S ribosomal RNA. The chain is Small ribosomal subunit protein bS20 from Prochlorococcus marinus (strain SARG / CCMP1375 / SS120).